We begin with the raw amino-acid sequence, 505 residues long: Maturase K (505 aa).

It belongs to the intron maturase 2 family. MatK subfamily.

Its subcellular location is the plastid. It is found in the chloroplast. In terms of biological role, usually encoded in the trnK tRNA gene intron. Probably assists in splicing its own and other chloroplast group II introns. The sequence is that of Maturase K from Kunzea ericoides (White teatree).